The primary structure comprises 288 residues: Acetyl-coenzyme A carboxylase carboxyl transferase subunit beta (288 aa).

In terms of domain architecture, CoA carboxyltransferase N-terminal spans 32-288; sequence MWAKCPSCKR…LRLHSLEGWR (257 aa). Zn(2+) is bound by residues Cys36, Cys39, Cys54, and Cys57. A C4-type zinc finger spans residues 36-57; sequence CPSCKRTLYTKEMGAEKICPHC.

Belongs to the AccD/PCCB family. As to quaternary structure, acetyl-CoA carboxylase is a heterohexamer composed of biotin carboxyl carrier protein (AccB), biotin carboxylase (AccC) and two subunits each of ACCase subunit alpha (AccA) and ACCase subunit beta (AccD). It depends on Zn(2+) as a cofactor.

It is found in the cytoplasm. The enzyme catalyses N(6)-carboxybiotinyl-L-lysyl-[protein] + acetyl-CoA = N(6)-biotinyl-L-lysyl-[protein] + malonyl-CoA. Its pathway is lipid metabolism; malonyl-CoA biosynthesis; malonyl-CoA from acetyl-CoA: step 1/1. Component of the acetyl coenzyme A carboxylase (ACC) complex. Biotin carboxylase (BC) catalyzes the carboxylation of biotin on its carrier protein (BCCP) and then the CO(2) group is transferred by the transcarboxylase to acetyl-CoA to form malonyl-CoA. This is Acetyl-coenzyme A carboxylase carboxyl transferase subunit beta from Enterococcus faecalis (strain ATCC 700802 / V583).